The following is a 1873-amino-acid chain: Voltage-dependent L-type calcium channel subunit alpha-1S (1873 aa).

Residues 1-23 are disordered; that stretch reads MEPSSPQDEGLRKKQPKKPVPEI. Residues 1–51 lie on the Cytoplasmic side of the membrane; the sequence is MEPSSPQDEGLRKKQPKKPVPEILPRPPRALFCLTLENPLRKACISIVEWK. An I repeat occupies 38–337; it reads NPLRKACISI…LVLGVLSGEF (300 aa). The chain crosses the membrane as a helical span at residues 52–70; that stretch reads PFETIILLTIFANCVALAV. Over 71–85 the chain is Extracellular; it reads YLPMPEDDNNSLNLG. Asparagine 79 carries N-linked (GlcNAc...) asparagine glycosylation. A helical transmembrane segment spans residues 86-106; that stretch reads LEKLEYFFLIVFSIEAAMKII. The Cytoplasmic portion of the chain corresponds to 107–115; it reads AYGFLFHQD. The helical transmembrane segment at 116-136 threads the bilayer; it reads AYLRSGWNVLDFTIVFLGVFT. Over 137–160 the chain is Extracellular; sequence VILEQVNVIQSHTAPMSSKGAGLD. Residues 161-179 traverse the membrane as a helical segment; the sequence is VKALRAFRVLRPLRLVSGV. The Cytoplasmic segment spans residues 180–196; that stretch reads PSLQVVLNSIFKAMLPL. A helical transmembrane segment spans residues 197 to 218; sequence FHIALLVLFMVIIYAIIGLELF. The Extracellular segment spans residues 219–279; the sequence is KGKMHKTCYF…HGITHFDNFG (61 aa). Intrachain disulfides connect cysteine 226-cysteine 254 and cysteine 245-cysteine 261. Asparagine 257 carries N-linked (GlcNAc...) asparagine glycosylation. Positions 280 to 301 form an intramembrane region, pore-forming; sequence FSMLTVYQCITMEGWTDVLYWV. A Selectivity filter of repeat I motif is present at residues 290-293; it reads TMEG. Glutamate 292 is a Ca(2+) binding site. Topologically, residues 302–309 are extracellular; sequence NDAIGNEW. A helical transmembrane segment spans residues 310–330; sequence PWIYFVTLILLGSFFILNLVL. Topologically, residues 331-432 are cytoplasmic; that stretch reads GVLSGEFTKE…WKCHDIVKSK (102 aa). Residues 357–374 are binding to the beta subunit; that stretch reads QQLDEDLRGYMSWITQGE. A phosphoserine mark is found at serine 393 and serine 397. Residues 418–664 form an II repeat; the sequence is NRIFRWKCHD…VFLAIAVDNL (247 aa). Residues 433 to 451 form a helical membrane-spanning segment; that stretch reads VFYWLVILIVALNTLSIAS. Residues 452–462 lie on the Extracellular side of the membrane; the sequence is EHHNQPLWLTR. Residues 463 to 483 traverse the membrane as a helical segment; it reads LQDIANRVLLSLFTTEMLMKM. Over 484–494 the chain is Cytoplasmic; sequence YGLGLRQYFMS. A helical membrane pass occupies residues 495-514; that stretch reads IFNRFDCFVVCSGILEILLV. Topologically, residues 515 to 523 are extracellular; it reads ESGAMTPLG. The helical transmembrane segment at 524-542 threads the bilayer; it reads ISVLRCIRLLRIFKITKYW. Residues 543–561 are Cytoplasmic-facing; the sequence is TSLSNLVASLLNSIRSIAS. Residues 562-581 form a helical membrane-spanning segment; it reads LLLLLFLFIVIFALLGMQLF. Residues 582 to 601 lie on the Extracellular side of the membrane; that stretch reads GGRYDFEDTEVRRSNFDNFP. The segment at residues 602–623 is an intramembrane region (pore-forming); sequence QALISVFQVLTGEDWTSMMYNG. The Selectivity filter of repeat II signature appears at 612–615; that stretch reads TGED. Ca(2+) is bound at residue glutamate 614. Topologically, residues 624–633 are extracellular; sequence IMAYGGPSYP. Residues 634–653 form a helical membrane-spanning segment; sequence GMLVCIYFIILFVCGNYILL. The Cytoplasmic segment spans residues 654-799; it reads NVFLAIAVDN…VLCHRIVNAT (146 aa). Disordered regions lie at residues 675 to 717 and 731 to 757; these read KAKA…IPTT and EVKD…LSPR. Phosphoserine; by PKA is present on serine 687. Positions 690-711 are enriched in basic and acidic residues; that stretch reads LPDKSEEEKSTMAKKLEQKPKG. The segment covering 742–751 has biased composition (acidic residues); that stretch reads PGDDEEDEPE. The interaction with STAC, STAC2 and STAC3 (via SH3 domains) stretch occupies residues 747–760; the sequence is EDEPEIPLSPRPRP. The stretch at 786-1068 is one III repeat; it reads NKIRVLCHRI…IFVGFVIVTF (283 aa). Residues 800 to 818 traverse the membrane as a helical segment; that stretch reads WFTNFILLFILLSSAALAA. At 819 to 830 the chain is on the extracellular side; sequence EDPIRADSMRNQ. Residues 831–850 traverse the membrane as a helical segment; the sequence is ILKHFDIGFTSVFTVEIVLK. The Cytoplasmic portion of the chain corresponds to 851 to 866; sequence MTTYGAFLHKGSFCRN. Residues 867 to 885 form a helical membrane-spanning segment; that stretch reads YFNMLDLLVVAVSLISMGL. Topologically, residues 886–892 are extracellular; it reads ESSAISV. The helical transmembrane segment at 893 to 911 threads the bilayer; the sequence is VKILRVLRVLRPLRAINRA. Over 912–930 the chain is Cytoplasmic; the sequence is KGLKHVVQCMFVAISTIGN. The helical transmembrane segment at 931-950 threads the bilayer; sequence IVLVTTLLQFMFACIGVQLF. The Extracellular portion of the chain corresponds to 951-1000; that stretch reads KGKFFRCTDLSKMTEEECRGYYYVYKDGDPMQIELRHREWVHSDFHFDNV. Cysteine 957 and cysteine 968 are joined by a disulfide. Residues 988 to 1077 form a dihydropyridine binding region; the sequence is REWVHSDFHF…FQEQGETEYK (90 aa). The segment at residues 1001–1021 is an intramembrane region (pore-forming); that stretch reads LSAMMSLFTVSTFEGWPQLLY. Residues 1012 to 1015 carry the Selectivity filter of repeat III motif; it reads TFEG. Glutamate 1014 contacts Ca(2+). Over 1022–1038 the chain is Extracellular; the sequence is KAIDSNAEDVGPIYNNR. Residues 1039-1060 form a helical membrane-spanning segment; the sequence is VEMAIFFIIYIILIAFFMMNIF. Residues 1061-1118 are Cytoplasmic-facing; sequence VGFVIVTFQEQGETEYKNCELDKNQRQCVQYALKARPLRCYIPKNPYQYQVWYIVTSS. The IV repeat unit spans residues 1105–1384; the sequence is NPYQYQVWYI…LFVAVIMDNF (280 aa). The chain crosses the membrane as a helical span at residues 1119 to 1140; that stretch reads YFEYLMFALIMLNTICLGMQHY. Asparagine 1141 carries N-linked (GlcNAc...) asparagine glycosylation. Topologically, residues 1141-1148 are extracellular; the sequence is NQSEQMNH. Residues 1149 to 1170 form a helical membrane-spanning segment; the sequence is ISDILNVAFTIIFTLEMILKLM. The Cytoplasmic segment spans residues 1171-1180; sequence AFKARGYFGD. A helical membrane pass occupies residues 1181–1200; the sequence is PWNVFDFLIVIGSIIDVILS. The Extracellular segment spans residues 1201–1231; it reads EIDTFLASSGGLYCLGGGCGNVDPDESARIS. A helical transmembrane segment spans residues 1232-1250; that stretch reads SAFFRLFRVMRLIKLLSRA. Topologically, residues 1251-1268 are cytoplasmic; the sequence is EGVRTLLWTFIKSFQALP. Residues 1269–1289 traverse the membrane as a helical segment; that stretch reads YVALLIVMLFFIYAVIGMQMF. Residues 1290–1311 are Extracellular-facing; sequence GKIALVDGTQINRNNNFQTFPQ. The pore-forming intramembrane region spans 1312–1330; sequence AVLLLFRCATGEAWQEILL. The Selectivity filter of repeat IV motif lies at 1321–1324; it reads TGEA. Residues 1331 to 1356 lie on the Extracellular side of the membrane; that stretch reads ACSYGKLCDPESDYAPGEEYTCGTNF. The dihydropyridine binding stretch occupies residues 1337–1403; sequence LCDPESDYAP…LGPHHLDEFK (67 aa). A disulfide bridge connects residues cysteine 1338 and cysteine 1352. The phenylalkylamine binding stretch occupies residues 1349–1391; the sequence is EYTCGTNFAYYYFISFYMLCAFLVINLFVAVIMDNFDYLTRDW. Residues 1357 to 1381 traverse the membrane as a helical segment; it reads AYYYFISFYMLCAFLVINLFVAVIM. Residues 1382–1873 lie on the Cytoplasmic side of the membrane; the sequence is DNFDYLTRDW…SQETLIPPRL (492 aa). An interaction with calmodulin region spans residues 1522–1542; the sequence is KFYATFLIQEHFRKFMKRQEE. Residue serine 1575 is modified to Phosphoserine; by PKA and CAMK2. Serine 1617 is modified (phosphoserine; by PKA). Residues 1731-1780 are disordered; the sequence is MPRGQAPPAPCQCPRVESSMPEDRKSSTPGSLHEETPHSRSTRENTSRCS. Residues 1751–1776 show a composition bias toward basic and acidic residues; it reads PEDRKSSTPGSLHEETPHSRSTRENT.

Belongs to the calcium channel alpha-1 subunit (TC 1.A.1.11) family. CACNA1S subfamily. Component of a calcium channel complex consisting of a pore-forming alpha subunit (CACNA1S) and the ancillary subunits CACNB1 or CACNB2, CACNG1 and CACNA2D1. The channel complex contains alpha, beta, gamma and delta subunits in a 1:1:1:1 ratio, i.e. it contains either CACNB1 or CACNB2. CACNA1S channel activity is modulated by the auxiliary subunits (CACNB1 or CACNB2, CACNG1 and CACNA2D1). Interacts with DYSF and JSRP1. Interacts with RYR1. Interacts with STAC, STAC2 and STAC3 (via their SH3 domains). Interacts with CALM. Post-translationally, the alpha-1S subunit is found in two isoforms in the skeletal muscle: a minor form of 212 kDa containing the complete amino acid sequence, and a major form of 190 kDa derived from the full-length form by post-translational proteolysis close to Phe-1690. Phosphorylated. Phosphorylation by PKA activates the calcium channel. Both the minor and major forms are phosphorylated in vitro by PKA. Phosphorylation at Ser-1575 is involved in beta-adrenergic-mediated regulation of the channel. As to expression, skeletal muscle specific.

It is found in the cell membrane. The protein localises to the sarcolemma. The protein resides in the T-tubule. It catalyses the reaction Ca(2+)(in) = Ca(2+)(out). Channel activity is blocked by dihydropyridines (DHP), phenylalkylamines, and by benzothiazepines. Pore-forming, alpha-1S subunit of the voltage-gated calcium channel that gives rise to L-type calcium currents in skeletal muscle. Calcium channels containing the alpha-1S subunit play an important role in excitation-contraction coupling in skeletal muscle via their interaction with RYR1, which triggers Ca(2+) release from the sarcoplasmic reticulum and ultimately results in muscle contraction. Long-lasting (L-type) calcium channels belong to the 'high-voltage activated' (HVA) group. This is Voltage-dependent L-type calcium channel subunit alpha-1S (CACNA1S) from Homo sapiens (Human).